Reading from the N-terminus, the 343-residue chain is MVMARKSDTLSEDVLPEDVRLEASLRPRSFDEYVGQGPVVEKLKVYVQAARSRGEALDHCLFSGPPGLGKTSLAHIIANELGVGIHVTSGPALERKGDLAGLLTNLDARDVLFIDEIHRLNAAVEEYLYPAMEDFRLDITIDTGPAARAMKIDLPPFTLIGATTRTGLLTSPLRDRFQIQERLEYYDAKALESILHRSARILGIPLDKDAAREVASRSRGTPRITNRLLRRLRDFAEVEGNGRITLELAQKSLDRLGVDASGLDSMDRKILLTILDKFGGGPVGVETIAASVGEQRDTIEDVYEPFLMQEGFLQRTPRGRMATHRTYQYFKKQPPPTPQGSLF.

The large ATPase domain (RuvB-L) stretch occupies residues 1-186; it reads MVMARKSDTL…FQIQERLEYY (186 aa). Residues leucine 25, arginine 26, glycine 67, lysine 70, threonine 71, serine 72, 133–135, arginine 176, tyrosine 186, and arginine 223 each bind ATP; that span reads EDF. Threonine 71 is a binding site for Mg(2+). A small ATPAse domain (RuvB-S) region spans residues 187–257; that stretch reads DAKALESILH…LAQKSLDRLG (71 aa). The interval 260 to 343 is head domain (RuvB-H); it reads ASGLDSMDRK…PPPTPQGSLF (84 aa). DNA-binding residues include arginine 296, arginine 315, and arginine 320.

The protein belongs to the RuvB family. In terms of assembly, homohexamer. Forms an RuvA(8)-RuvB(12)-Holliday junction (HJ) complex. HJ DNA is sandwiched between 2 RuvA tetramers; dsDNA enters through RuvA and exits via RuvB. An RuvB hexamer assembles on each DNA strand where it exits the tetramer. Each RuvB hexamer is contacted by two RuvA subunits (via domain III) on 2 adjacent RuvB subunits; this complex drives branch migration. In the full resolvosome a probable DNA-RuvA(4)-RuvB(12)-RuvC(2) complex forms which resolves the HJ.

The protein resides in the cytoplasm. The catalysed reaction is ATP + H2O = ADP + phosphate + H(+). In terms of biological role, the RuvA-RuvB-RuvC complex processes Holliday junction (HJ) DNA during genetic recombination and DNA repair, while the RuvA-RuvB complex plays an important role in the rescue of blocked DNA replication forks via replication fork reversal (RFR). RuvA specifically binds to HJ cruciform DNA, conferring on it an open structure. The RuvB hexamer acts as an ATP-dependent pump, pulling dsDNA into and through the RuvAB complex. RuvB forms 2 homohexamers on either side of HJ DNA bound by 1 or 2 RuvA tetramers; 4 subunits per hexamer contact DNA at a time. Coordinated motions by a converter formed by DNA-disengaged RuvB subunits stimulates ATP hydrolysis and nucleotide exchange. Immobilization of the converter enables RuvB to convert the ATP-contained energy into a lever motion, pulling 2 nucleotides of DNA out of the RuvA tetramer per ATP hydrolyzed, thus driving DNA branch migration. The RuvB motors rotate together with the DNA substrate, which together with the progressing nucleotide cycle form the mechanistic basis for DNA recombination by continuous HJ branch migration. Branch migration allows RuvC to scan DNA until it finds its consensus sequence, where it cleaves and resolves cruciform DNA. The chain is Holliday junction branch migration complex subunit RuvB from Myxococcus xanthus (strain DK1622).